Consider the following 90-residue polypeptide: Putative membrane protein insertion efficiency factor (90 aa).

It belongs to the UPF0161 family.

The protein localises to the cell membrane. Functionally, could be involved in insertion of integral membrane proteins into the membrane. The protein is Putative membrane protein insertion efficiency factor of Lactococcus lactis subsp. cremoris (strain SK11).